The following is a 445-amino-acid chain: Chromosomal replication initiator protein DnaA (445 aa).

The interval 1–73 is domain I, interacts with DnaA modulators; it reads MSTHLTETWE…VNALKLLTSK (73 aa). The tract at residues 73–106 is domain II; sequence KKYNIDFIVTTEEKIEKNHNNEKSNIVVNDEMST. Positions 107-323 are domain III, AAA+ region; that stretch reads MLNPKYTFDS…GALIRIVAFS (217 aa). ATP is bound by residues glycine 151, glycine 153, lysine 154, and threonine 155. The domain IV, binds dsDNA stretch occupies residues 324–445; the sequence is SLTNKEISVD…NDLNKRINQK (122 aa).

The protein belongs to the DnaA family. Oligomerizes as a right-handed, spiral filament on DNA at oriC.

Its subcellular location is the cytoplasm. Functionally, plays an essential role in the initiation and regulation of chromosomal replication. ATP-DnaA binds to the origin of replication (oriC) to initiate formation of the DNA replication initiation complex once per cell cycle. Binds the DnaA box (a 9 base pair repeat at the origin) and separates the double-stranded (ds)DNA. Forms a right-handed helical filament on oriC DNA; dsDNA binds to the exterior of the filament while single-stranded (ss)DNA is stabiized in the filament's interior. The ATP-DnaA-oriC complex binds and stabilizes one strand of the AT-rich DNA unwinding element (DUE), permitting loading of DNA polymerase. After initiation quickly degrades to an ADP-DnaA complex that is not apt for DNA replication. Binds acidic phospholipids. The sequence is that of Chromosomal replication initiator protein DnaA from Clostridium botulinum (strain Loch Maree / Type A3).